We begin with the raw amino-acid sequence, 55 residues long: MSNATTTNGKAPSQDVVAVIVGALAAMGYSADQIAHIRPIVSYNWKMEGRLRGNR.

In terms of assembly, the methylmalonyl-CoA decarboxylase is composed of five subunits: the carboxyltransferase alpha subunit (MmdA), the tunnel beta subunit (MmdB), the biotin-containing gamma subunit (MmdC), and the delta (MmdD) and epsilon (MmdE) subunits.

The protein localises to the cell membrane. The enzyme catalyses (S)-methylmalonyl-CoA + Na(+)(in) + H(+)(out) = propanoyl-CoA + Na(+)(out) + CO2. With respect to regulation, completely inhibited by avidin. Subunit of the sodium ion pump methylmalonyl-CoA decarboxylase, which converts the chemical energy of a decarboxylation reaction into an electrochemical gradient of Na(+) ions across the cytoplasmic membrane, thereby creating a sodium ion motive force that is used for ATP synthesis. The epsilon subunit seems not important for the catalysis of either decarboxylation or Na(+) transport, but it improves binding of the alpha subunit and plays an important role in stabilizing the methylmalonyl-CoA-decarboxylase enzyme complex. Can also convert malonyl-CoA into acetyl-CoA. This chain is Methylmalonyl-CoA decarboxylase subunit epsilon, found in Veillonella parvula (Staphylococcus parvulus).